Here is a 664-residue protein sequence, read N- to C-terminus: DNA ligase (664 aa).

NAD(+) is bound by residues 32–36 (DKEYD) and 80–81 (SL). Lys122 (N6-AMP-lysine intermediate) is an active-site residue. NAD(+) contacts are provided by Arg144, Glu178, and Lys314. The Zn(2+) site is built by Cys407, Cys410, Cys423, and Cys429. The BRCT domain occupies 587 to 664 (IDENPFMDKT…NEEEFSNKIK (78 aa)).

It belongs to the NAD-dependent DNA ligase family. LigA subfamily. It depends on Mg(2+) as a cofactor. The cofactor is Mn(2+).

It catalyses the reaction NAD(+) + (deoxyribonucleotide)n-3'-hydroxyl + 5'-phospho-(deoxyribonucleotide)m = (deoxyribonucleotide)n+m + AMP + beta-nicotinamide D-nucleotide.. Functionally, DNA ligase that catalyzes the formation of phosphodiester linkages between 5'-phosphoryl and 3'-hydroxyl groups in double-stranded DNA using NAD as a coenzyme and as the energy source for the reaction. It is essential for DNA replication and repair of damaged DNA. In Clostridium botulinum (strain Langeland / NCTC 10281 / Type F), this protein is DNA ligase.